The primary structure comprises 249 residues: Urease accessory protein UreG (249 aa).

Positions 1–13 (MHLGHEEFQRTDG) are enriched in basic and acidic residues. The disordered stretch occupies residues 1–34 (MHLGHEEFQRTDGRASTGPADAGPAGAGRAPRIG). Low complexity predominate over residues 18–33 (GPADAGPAGAGRAPRI). 37–44 (GPVGSGKT) serves as a coordination point for GTP. The tract at residues 229 to 249 (PRGGSYDASDASNASQPLNRM) is disordered. A compositionally biased stretch (polar residues) spans 238 to 249 (DASNASQPLNRM).

It belongs to the SIMIBI class G3E GTPase family. UreG subfamily. As to quaternary structure, homodimer. UreD, UreF and UreG form a complex that acts as a GTP-hydrolysis-dependent molecular chaperone, activating the urease apoprotein by helping to assemble the nickel containing metallocenter of UreC. The UreE protein probably delivers the nickel.

It is found in the cytoplasm. Functionally, facilitates the functional incorporation of the urease nickel metallocenter. This process requires GTP hydrolysis, probably effectuated by UreG. The polypeptide is Urease accessory protein UreG (Frankia casuarinae (strain DSM 45818 / CECT 9043 / HFP020203 / CcI3)).